Reading from the N-terminus, the 1032-residue chain is Calmodulin-binding transcription activator 3 (1032 aa).

The CG-1 DNA-binding region spans 15-141; it reads VGQILSEARH…YLEVKGSRVS (127 aa). A disordered region spans residues 146 to 197; that stretch reads RMQRTEDAARSPQETGDALTSEHDGYASCSFNQNDHSNHSQTTDSASVNGFH. Over residues 174-195 the composition is skewed to polar residues; it reads CSFNQNDHSNHSQTTDSASVNG. The residue at position 272 (Ser-272) is a Phosphoserine. ANK repeat units lie at residues 661 to 690, 694 to 723, and 733 to 762; these read GGQG…SVDF, NGWT…APGT, and SGST…RAHV. 2 IQ domains span residues 852 to 881 and 875 to 904; these read VQAA…RIIK and TRQR…SVGV. A calmodulin-binding region spans residues 900–922; the sequence is WSVGVLEKVILRWRRKGAGLRGF. Residues 945 to 987 are a coiled coil; that stretch reads KQGRKQTEDRLQKALARVKSMVQYPEARDQYRRLLNVVNDIQE. Ser-964 carries the post-translational modification Phosphoserine.

It belongs to the CAMTA family. In terms of assembly, interacts with SR1IP1. Interacts with DSC1. Ubiquinated during pathogen infection. Ubiquitination leads to its subsequent proteasome-dependent degradation, thus allowing the establishment of plant defense response. In terms of tissue distribution, expressed in roots, stems, leaves, carpels, and siliques, but not in stigmas or other parts of the flower.

The protein resides in the nucleus. Functionally, transcription activator that binds to the DNA consensus sequence 5'-[ACG]CGCG[GTC]-3'. Binds calmodulin in a calcium-dependent manner in vitro. Regulates transcriptional activity in response to calcium signals. Involved in freezing tolerance in association with CAMTA1 and CAMTA2. Required for the cold-induced expression of DREB1B/CBF1, DREB1C/CBF2, ZAT12 and GOLS3. Involved in response to cold. Contributes together with CAMTA5 to the positive regulation of the cold-induced expression of DREB1A/CBF3, DREB1B/CBF1 and DREB1C/CBF2. Involved together with CAMTA2 and CAMTA4 in the positive regulation of a general stress response (GSR). Involved in the regulation of GSR amplitude downstream of MEKK1. Involved in the regulation of a set of genes involved in defense responses against pathogens. Involved in the regulation of both basal resistance and systemic acquired resistance (SAR). Acts as negative regulator of plant immunity. Binds to the promoter of the defense-related gene EDS1 and represses its expression. Binds to the promoter of the defense-related gene NDR1 and represses its expression. Involved in defense against insects. Required for tolerance to the generalist herbivore Trichoplusia ni, and contributes to the positive regulation of genes associated with glucosinolate metabolism. Required for tolerance to Bradysia impatiens larvae. Mediates herbivore-induced wound response. Required for wound-induced jasmonate accumulation. Involved in the regulation of ethylene-induced senescence by binding to the promoter of the senescence-inducer gene EIN3 and repressing its expression. The polypeptide is Calmodulin-binding transcription activator 3 (Arabidopsis thaliana (Mouse-ear cress)).